The chain runs to 65 residues: Carboxypeptidase A inhibitor (65 aa).

The protein belongs to the protease inhibitor I44 family.

It localises to the secreted. Functionally, inhibits carboxypeptidase A. The protein is Carboxypeptidase A inhibitor of Ascaris suum (Pig roundworm).